The primary structure comprises 209 residues: Pyridoxine/pyridoxamine 5'-phosphate oxidase (209 aa).

Residues 7–10 and Lys64 contribute to the substrate site; that span reads RADY. Residues 59-64, 74-75, and Lys81 contribute to the FMN site; these read RIVLLK and FT. Residues Tyr121, Arg125, and Ser129 each contribute to the substrate site. Residues 138 to 139, Trp182, and Arg192 contribute to the FMN site; that span reads QS.

Belongs to the pyridoxamine 5'-phosphate oxidase family. Homodimer. Requires FMN as cofactor.

The enzyme catalyses pyridoxamine 5'-phosphate + O2 + H2O = pyridoxal 5'-phosphate + H2O2 + NH4(+). It catalyses the reaction pyridoxine 5'-phosphate + O2 = pyridoxal 5'-phosphate + H2O2. It functions in the pathway cofactor metabolism; pyridoxal 5'-phosphate salvage; pyridoxal 5'-phosphate from pyridoxamine 5'-phosphate: step 1/1. The protein operates within cofactor metabolism; pyridoxal 5'-phosphate salvage; pyridoxal 5'-phosphate from pyridoxine 5'-phosphate: step 1/1. Catalyzes the oxidation of either pyridoxine 5'-phosphate (PNP) or pyridoxamine 5'-phosphate (PMP) into pyridoxal 5'-phosphate (PLP). In Haemophilus ducreyi (strain 35000HP / ATCC 700724), this protein is Pyridoxine/pyridoxamine 5'-phosphate oxidase.